A 401-amino-acid chain; its full sequence is Nodal homolog 3-A (401 aa).

The N-terminal stretch at 1 to 18 is a signal peptide; sequence MAFLSLFLCLVFSSPLMA. Positions 19–274 are excised as a propeptide; the sequence is MPPALQGRKA…KVNGFRRLRR (256 aa). Asn-168, Asn-337, and Asn-344 each carry an N-linked (GlcNAc...) asparagine glycan. Cystine bridges form between Cys-299–Cys-365 and Cys-328–Cys-396.

The protein belongs to the TGF-beta family. As to quaternary structure, monomer. The propeptide region interacts with bmp4 in a non-covalent manner. In terms of tissue distribution, expressed in the dorsal marginal region of late blastula, becoming restricted to the Spemann organizer at the early gastrula stage.

The protein localises to the secreted. Exhibits mesoderm-dorsalizing activity and neural-inducing activity, but lacks mesoderm-inducing activity. Regulates the expression of specific mesodermal and neural genes. Induces convergent extension movements at the embryonic midline by activating the fgf signaling pathway to induce t/bra expression in the organizer region. Acts with wnt11 to induce Spemann organizer cells and induce axis formation. The unprocessed protein antagonizes bmp-signaling. This chain is Nodal homolog 3-A, found in Xenopus tropicalis (Western clawed frog).